The sequence spans 346 residues: Uroporphyrinogen decarboxylase (346 aa).

Substrate is bound by residues 26–30, D76, Y153, S208, and H323; that span reads RQAGR.

Belongs to the uroporphyrinogen decarboxylase family. In terms of assembly, homodimer.

The protein localises to the cytoplasm. It catalyses the reaction uroporphyrinogen III + 4 H(+) = coproporphyrinogen III + 4 CO2. It functions in the pathway porphyrin-containing compound metabolism; protoporphyrin-IX biosynthesis; coproporphyrinogen-III from 5-aminolevulinate: step 4/4. In terms of biological role, catalyzes the decarboxylation of four acetate groups of uroporphyrinogen-III to yield coproporphyrinogen-III. In Prochlorococcus marinus (strain MIT 9215), this protein is Uroporphyrinogen decarboxylase.